The following is a 359-amino-acid chain: UDP-3-O-acylglucosamine N-acyltransferase (359 aa).

The active-site Proton acceptor is histidine 253.

This sequence belongs to the transferase hexapeptide repeat family. LpxD subfamily. In terms of assembly, homotrimer.

It catalyses the reaction a UDP-3-O-[(3R)-3-hydroxyacyl]-alpha-D-glucosamine + a (3R)-hydroxyacyl-[ACP] = a UDP-2-N,3-O-bis[(3R)-3-hydroxyacyl]-alpha-D-glucosamine + holo-[ACP] + H(+). It participates in bacterial outer membrane biogenesis; LPS lipid A biosynthesis. In terms of biological role, catalyzes the N-acylation of UDP-3-O-acylglucosamine using 3-hydroxyacyl-ACP as the acyl donor. Is involved in the biosynthesis of lipid A, a phosphorylated glycolipid that anchors the lipopolysaccharide to the outer membrane of the cell. In Burkholderia lata (strain ATCC 17760 / DSM 23089 / LMG 22485 / NCIMB 9086 / R18194 / 383), this protein is UDP-3-O-acylglucosamine N-acyltransferase.